An 87-amino-acid polypeptide reads, in one-letter code: Large ribosomal subunit protein bL27 (87 aa).

The protein belongs to the bacterial ribosomal protein bL27 family.

This Stenotrophomonas maltophilia (strain K279a) protein is Large ribosomal subunit protein bL27.